Consider the following 302-residue polypeptide: MIERSHHELRKAFGDLLQGHVCKFAASVFDPISVRMASDLGFEVGIQGGSVASLQVLGAPDIALLTLDEYVEQVTRVGRASQIPVIADADHGFGNALNVMRTVSELQKAGVAALTLEDTHLPARYEEQSPVLIGEEEAAAKIYAARFSRSDDSLSIIARTNVAATTLEDSIARTAAYEKAGADAICLVGVKDFHHLAALTEHLTTPIMLINYGNPALCDVEKLSAANVRIVVNGHAPYFSAIKSIYQALREQSGSQGPELSLPELISKYTRVESYREWTKTYLKVGHDSPCGVTPRGPQLCN.

Serine 50 contacts substrate. Aspartate 88 provides a ligand contact to Mg(2+). Residues arginine 159 and histidine 235 each contribute to the substrate site.

It belongs to the isocitrate lyase/PEP mutase superfamily. Oxaloacetate decarboxylase family. Homotetramer; dimer of dimers. Mg(2+) is required as a cofactor.

It catalyses the reaction oxaloacetate + H(+) = pyruvate + CO2. In terms of biological role, catalyzes the decarboxylation of oxaloacetate into pyruvate. Seems to play a role in maintaining cellular concentrations of bicarbonate and pyruvate. The protein is Oxaloacetate decarboxylase 2 of Pseudomonas putida (strain W619).